The primary structure comprises 68 residues: MQEMLIKLIKIYQKATFFKPASCRFYPSCSNYSIEALRKYGIVKGGWLTVKRLARCHPYNPGGYDPVP.

The protein belongs to the UPF0161 family.

The protein localises to the cell membrane. In terms of biological role, could be involved in insertion of integral membrane proteins into the membrane. This chain is Putative membrane protein insertion efficiency factor, found in Syntrophomonas wolfei subsp. wolfei (strain DSM 2245B / Goettingen).